Consider the following 439-residue polypeptide: Methylenetetrahydrofolate--tRNA-(uracil-5-)-methyltransferase TrmFO (439 aa).

Residue 9–14 coordinates FAD; it reads GAGLAG.

This sequence belongs to the MnmG family. TrmFO subfamily. FAD serves as cofactor.

It localises to the cytoplasm. The enzyme catalyses uridine(54) in tRNA + (6R)-5,10-methylene-5,6,7,8-tetrahydrofolate + NADH + H(+) = 5-methyluridine(54) in tRNA + (6S)-5,6,7,8-tetrahydrofolate + NAD(+). It catalyses the reaction uridine(54) in tRNA + (6R)-5,10-methylene-5,6,7,8-tetrahydrofolate + NADPH + H(+) = 5-methyluridine(54) in tRNA + (6S)-5,6,7,8-tetrahydrofolate + NADP(+). Functionally, catalyzes the folate-dependent formation of 5-methyl-uridine at position 54 (M-5-U54) in all tRNAs. The polypeptide is Methylenetetrahydrofolate--tRNA-(uracil-5-)-methyltransferase TrmFO (Lactobacillus delbrueckii subsp. bulgaricus (strain ATCC BAA-365 / Lb-18)).